Here is a 166-residue protein sequence, read N- to C-terminus: uncharacterized protein (166 aa).

4Fe-4S ferredoxin-type domains follow at residues 3–33 (MKKI…GRIA), 37–67 (KDGK…EHKD), and 68–97 (GYVY…MEDK). The [4Fe-4S] cluster site is built by Cys13, Cys16, Cys19, Cys23, Cys46, Cys49, Cys54, Cys58, Cys77, Cys80, Cys83, Cys87, Cys101, Cys104, Cys111, and Cys115.

[4Fe-4S] cluster is required as a cofactor.

This is an uncharacterized protein from Methanocaldococcus jannaschii (strain ATCC 43067 / DSM 2661 / JAL-1 / JCM 10045 / NBRC 100440) (Methanococcus jannaschii).